The following is a 179-amino-acid chain: Large ribosomal subunit protein uL6 (179 aa).

Belongs to the universal ribosomal protein uL6 family. In terms of assembly, part of the 50S ribosomal subunit.

This protein binds to the 23S rRNA, and is important in its secondary structure. It is located near the subunit interface in the base of the L7/L12 stalk, and near the tRNA binding site of the peptidyltransferase center. The polypeptide is Large ribosomal subunit protein uL6 (Alkaliphilus metalliredigens (strain QYMF)).